Reading from the N-terminus, the 123-residue chain is uncharacterized protein (123 aa).

Residues 17 to 117 (SNDNAFLVDV…NNQDKGWKQN (101 aa)) enclose the Rhodanese domain.

This is an uncharacterized protein from Rickettsia conorii (strain ATCC VR-613 / Malish 7).